The sequence spans 40 residues: Photosystem II reaction center protein J (40 aa).

The helical transmembrane segment at 8–28 threads the bilayer; that stretch reads IPLWIVGTVTGILVIGLIGVF.

The protein belongs to the PsbJ family. In terms of assembly, PSII is composed of 1 copy each of membrane proteins PsbA, PsbB, PsbC, PsbD, PsbE, PsbF, PsbH, PsbI, PsbJ, PsbK, PsbL, PsbM, PsbT, PsbX, PsbY, PsbZ, Psb30/Ycf12, at least 3 peripheral proteins of the oxygen-evolving complex and a large number of cofactors. It forms dimeric complexes.

Its subcellular location is the plastid. The protein localises to the chloroplast thylakoid membrane. Its function is as follows. One of the components of the core complex of photosystem II (PSII). PSII is a light-driven water:plastoquinone oxidoreductase that uses light energy to abstract electrons from H(2)O, generating O(2) and a proton gradient subsequently used for ATP formation. It consists of a core antenna complex that captures photons, and an electron transfer chain that converts photonic excitation into a charge separation. The polypeptide is Photosystem II reaction center protein J (Coffea arabica (Arabian coffee)).